A 154-amino-acid polypeptide reads, in one-letter code: MRKIIIPIITILLIALDQLSKLWIVKHIELNQIKEFIPNIVSLTYLRNYGAAFSILQNQQWLFTLITIFVVGVAIIYLMKHINGSYWLLISLTLIISGGLGNFIDRLRLGYVVDMVHLDFINFAIFNVADSYLTIGIICLMIALWKEESNGNHN.

Transmembrane regions (helical) follow at residues 4 to 24, 62 to 82, and 84 to 104; these read IIIP…KLWI, LFTL…MKHI, and GSYW…GNFI. Active-site residues include Asp114 and Asp130. A helical membrane pass occupies residues 125–145; the sequence is IFNVADSYLTIGIICLMIALW.

This sequence belongs to the peptidase A8 family.

Its subcellular location is the cell membrane. It carries out the reaction Release of signal peptides from bacterial membrane prolipoproteins. Hydrolyzes -Xaa-Yaa-Zaa-|-(S,diacylglyceryl)Cys-, in which Xaa is hydrophobic (preferably Leu), and Yaa (Ala or Ser) and Zaa (Gly or Ala) have small, neutral side chains.. The protein operates within protein modification; lipoprotein biosynthesis (signal peptide cleavage). Its function is as follows. This protein specifically catalyzes the removal of signal peptides from prolipoproteins. This Streptococcus agalactiae serotype V (strain ATCC BAA-611 / 2603 V/R) protein is Lipoprotein signal peptidase.